The chain runs to 330 residues: Biotin synthase (330 aa).

In terms of domain architecture, Radical SAM core spans 43–272 (FMGDKFDTCS…RAFLRFSGGR (230 aa)). Residues C61, C65, and C68 each contribute to the [4Fe-4S] cluster site. 4 residues coordinate [2Fe-2S] cluster: S105, C137, C197, and R267.

This sequence belongs to the radical SAM superfamily. Biotin synthase family. As to quaternary structure, homodimer. Requires [4Fe-4S] cluster as cofactor. The cofactor is [2Fe-2S] cluster.

It catalyses the reaction (4R,5S)-dethiobiotin + (sulfur carrier)-SH + 2 reduced [2Fe-2S]-[ferredoxin] + 2 S-adenosyl-L-methionine = (sulfur carrier)-H + biotin + 2 5'-deoxyadenosine + 2 L-methionine + 2 oxidized [2Fe-2S]-[ferredoxin]. Its pathway is cofactor biosynthesis; biotin biosynthesis; biotin from 7,8-diaminononanoate: step 2/2. Its function is as follows. Catalyzes the conversion of dethiobiotin (DTB) to biotin by the insertion of a sulfur atom into dethiobiotin via a radical-based mechanism. The polypeptide is Biotin synthase (Porphyromonas gingivalis (strain ATCC 33277 / DSM 20709 / CIP 103683 / JCM 12257 / NCTC 11834 / 2561)).